The primary structure comprises 554 residues: Hydroxylamine reductase (554 aa).

The [2Fe-2S] cluster site is built by cysteine 3, cysteine 6, cysteine 18, and cysteine 25. 8 residues coordinate hybrid [4Fe-2O-2S] cluster: histidine 252, glutamate 276, cysteine 320, cysteine 408, cysteine 436, cysteine 461, glutamate 495, and lysine 497. Cysteine 408 bears the Cysteine persulfide mark.

The protein belongs to the HCP family. [2Fe-2S] cluster is required as a cofactor. Hybrid [4Fe-2O-2S] cluster serves as cofactor.

Its subcellular location is the cytoplasm. It carries out the reaction A + NH4(+) + H2O = hydroxylamine + AH2 + H(+). Functionally, catalyzes the reduction of hydroxylamine to form NH(3) and H(2)O. This Shewanella oneidensis (strain ATCC 700550 / JCM 31522 / CIP 106686 / LMG 19005 / NCIMB 14063 / MR-1) protein is Hydroxylamine reductase.